The following is an 849-amino-acid chain: MFDFSLEAIVYAKAITLLATVAVVMMWLFYYCYRLKQKNEVIFGTHHAAYIAYSVCIIAWISSNAYFHTDLLPELGASAGMFMAKFANLASFFAFAFAYYFSCQLAAEQRKGKVHRWQQGIFVSLTVYSLFINLRPGLTVEHVDIVGPSQFIIEFGPHTSYFFIGLVSFVVLTLVNLVAMRTNSSKLTLAKTNYMIAGILVFMLSTAVIHLGMTYFMGDFSLTWLPPALSISEMLFVGYALLTSRFYSVKYIAYLALSVLLVCAIFVLPLGAIFIPLTESNQWLIAIPICALIGITWQLLYKKTSRYASFLIYGDKKTPVQQILSLEEDFKLSIDDAMRRLGKLLQIPNDKLRLVTSNYNETFYEEYLSSNRSVLVFDELSEELEYKVSAKRSMKALYDKMSSNNTALVMPLFGQGKSVTHLLISPHKSNNQMFSNEEISAVQTLLTRVQSTIEADRRIRQSRALANSIAHEMRNPLAQVQLQFEALKQHIENHAPVEQITLDIENGQAAIQRGRQLIDIILREVSDSSPEHEPIAMTSIHKAVDQAVSHYGFENEKIIERIRLPQHTDFVAKLNETLFNFVIFNLIRNAIYYFDSYPDSQIEISTKTGPYENTLIFRDTGPGIDETISHKIFDDFFSYQKSGGSGLGLGYCQRVMRSFGGRIECKSKLGTFTEFHLYFPVVPNAPKADTLRTPYFNDWKQNKRSNEHKVAPNVQINNQSPTVLIVDDKEVQRALVQMYLNQLGVNSLQANNGENAVEVFKANHVDLILMDVQMPVMNGFDASQRIKELSPQTPIVALSGESGERELDMINKLMDGRLEKPTTLNALRHVLGNWLNKNTASSACEAERE.

The next 7 helical transmembrane spans lie at 9–29 (IVYA…MWLF), 41–61 (VIFG…IAWI), 160–180 (SYFF…LVAM), 196–216 (IAGI…MTYF), 220–242 (FSLT…YALL), 251–275 (YIAY…AIFI), and 283–301 (WLIA…QLLY). Residues 468–683 (SIAHEMRNPL…EFHLYFPVVP (216 aa)) enclose the Histidine kinase domain. At H471 the chain carries Phosphohistidine; by autocatalysis. The region spanning 722–835 (TVLIVDDKEV…ALRHVLGNWL (114 aa)) is the Response regulatory domain. D771 carries the 4-aspartylphosphate modification.

The protein resides in the cell inner membrane. It carries out the reaction ATP + protein L-histidine = ADP + protein N-phospho-L-histidine.. Its activity is regulated as follows. The phosphatase activity is constitutive and the kinase activity is regulated by the presence or absence of AI-1. At low cell density the kinase activity overrides the phosphatase activity. Functionally, at low cell density, in the absence of AI-1 (autoinducer 1), LuxN has a kinase activity and autophosphorylates on His-471. The phosphoryl group is then transferred on Asp-771 of the response regulator domain. The phosphoryl group is transferred to LuxU, and ultimately to LuxO. At high cell density, in the presence of AI-1, the kinase activity is inactivated, and the response regulator domain has a phosphatase activity. LuxN phosphatase acts on itself. As LuxU could function to establish an equilibrium between the aspartyl-phosphate of LuxN and the aspartyl-phosphate of LuxO, LuxU transfers phosphate from LuxO to LuxN and finally phosphate is drained from the system. The protein is Autoinducer 1 sensor kinase/phosphatase LuxN (luxN) of Vibrio campbellii (strain ATCC BAA-1116).